The following is a 114-amino-acid chain: Lectin MVL (114 aa).

The stretch at 2-55 (ASYKVNIPAGPLWSNAEAQQVGPKIAAAHQGNFTGQWTTVVESAMSVVEVELQV) is repeat 1. A carbohydrate-binding positions include 12–16 (PLWSN), Gln-20, and 36–44 (GQWTTVVES). A linker region spans residues 56-60 (ENTGI). Residues 61–114 (HEFKTDVLAGPLWSNDEAQKLGPQIAASYGAEFTGQWRTIVEGVMSVIQIKYTF) form repeat 2. A carbohydrate-binding positions include 71–75 (PLWSN), Gln-79, and 95–103 (GQWRTIVEG).

In terms of assembly, homodimer.

Its subcellular location is the cytoplasm. Its function is as follows. Carbohydrate-binding protein that binds oligomannosides such as Man(6)GlcNAc(2) with sub-micromolar affinities. The specificity of MVL is unique in that its minimal target comprises the Man-alpha-(1-&gt;6)-Man-beta-(1-&gt;4)-GlcNAc-beta-(1-&gt;4)-GlcNAc tetrasaccharide core (Man(2)A) found in N-linked oligomannosides. Displays hemagglutininating activity on rabbit, horse and hen erythrocytes. This activity is inhibited by yeast mannan. Does not bind mono- and disaccharides. Inhibits HIV-1 envelope-mediated cell fusion at nanomolar concentrations through carbohydrate-mediated interactions with high-mannose residues on the surface of the HIV envelope glycoprotein gp120. In terms of biological role, unexpectedly for a lectin, one of the 2 oligomannose binding sites of MVL can catalyze the cleavage of chitin fragments (such as chitotriose, i.e. GlcNAc(3) or GlcNAc-beta-(1-&gt;4)-GlcNAcbeta-(1-&gt;4)-GlcNAc, and chitotetraose, i.e. GlcNAc(4)) to GlcNAc. This weak beta-1,4-glycosidase activity is restricted to the C-terminal carbohydrate-binding site. Does not cleave Man(3)GlcNAc(2) or the tetrasaccharide Man(2)A. This Microcystis viridis (Polycystis viridis) protein is Lectin MVL (mvl).